A 309-amino-acid chain; its full sequence is Jacalin-related lectin 25 (309 aa).

The region spanning 8-190 (MFKVGPIGSQ…LTSIGIYVCP (183 aa)) is the Jacalin-type lectin domain.

It belongs to the jacalin lectin family.

This Arabidopsis thaliana (Mouse-ear cress) protein is Jacalin-related lectin 25 (JAL25).